Here is a 147-residue protein sequence, read N- to C-terminus: Hemoglobin subunit gamma-1 (147 aa).

At Gly-2 the chain carries N-acetylglycine. The Globin domain occupies 3-147 (HFTEEDKATI…VASALSSRYH (145 aa)). At Thr-13 the chain carries Phosphothreonine. 3 positions are modified to phosphoserine: Ser-45, Ser-51, and Ser-53. At Lys-60 the chain carries N6-acetyllysine. Position 64 (His-64) interacts with heme b. N6-acetyllysine is present on Lys-83. Position 93 (His-93) interacts with heme b. Cys-94 is subject to S-nitrosocysteine. Ser-140 carries the post-translational modification Phosphoserine.

It belongs to the globin family. In terms of assembly, heterotetramer of two alpha chains and two gamma chains in fetal hemoglobin (Hb F). In terms of tissue distribution, red blood cells.

Its function is as follows. Gamma chains make up the fetal hemoglobin F, in combination with alpha chains. In Gorilla gorilla gorilla (Western lowland gorilla), this protein is Hemoglobin subunit gamma-1 (HBG1).